Here is a 179-residue protein sequence, read N- to C-terminus: Large ribosomal subunit protein uL6 (179 aa).

Belongs to the universal ribosomal protein uL6 family. In terms of assembly, part of the 50S ribosomal subunit.

In terms of biological role, this protein binds to the 23S rRNA, and is important in its secondary structure. It is located near the subunit interface in the base of the L7/L12 stalk, and near the tRNA binding site of the peptidyltransferase center. The polypeptide is Large ribosomal subunit protein uL6 (Syntrophobacter fumaroxidans (strain DSM 10017 / MPOB)).